Reading from the N-terminus, the 154-residue chain is Transcriptional repressor NrdR (154 aa).

Residues 3–34 fold into a zinc finger; sequence CPHCHKNGSRVVDSRPSEDGSFIRRRRECIHC. One can recognise an ATP-cone domain in the interval 49–139; sequence LLVIKKDGTR…VYRQFKDVDA (91 aa).

The protein belongs to the NrdR family. The cofactor is Zn(2+).

Its function is as follows. Negatively regulates transcription of bacterial ribonucleotide reductase nrd genes and operons by binding to NrdR-boxes. This Limosilactobacillus reuteri (strain DSM 20016) (Lactobacillus reuteri) protein is Transcriptional repressor NrdR.